The chain runs to 542 residues: Thermosome subunit (542 aa).

Belongs to the TCP-1 chaperonin family. As to quaternary structure, forms an oligomeric complex of eight-membered rings.

Its function is as follows. Molecular chaperone; binds unfolded polypeptides in vitro, and has a weak ATPase activity. This chain is Thermosome subunit (ths), found in Methanocaldococcus jannaschii (strain ATCC 43067 / DSM 2661 / JAL-1 / JCM 10045 / NBRC 100440) (Methanococcus jannaschii).